The primary structure comprises 176 residues: Xanthine-guanine phosphoribosyltransferase (176 aa).

5-phospho-alpha-D-ribose 1-diphosphate-binding positions include 51–52 (RG), Arg-88, and 111–119 (DDLVDSGKT). Position 88 (Arg-88) interacts with GMP. Asp-112 lines the Mg(2+) pocket. Guanine-binding residues include Asp-115 and Ile-158. Positions 115 and 158 each coordinate xanthine. GMP is bound by residues 115-119 (DSGKT) and 157-158 (WI).

This sequence belongs to the purine/pyrimidine phosphoribosyltransferase family. XGPT subfamily. Homotetramer. It depends on Mg(2+) as a cofactor.

The protein resides in the cell inner membrane. It catalyses the reaction GMP + diphosphate = guanine + 5-phospho-alpha-D-ribose 1-diphosphate. It carries out the reaction XMP + diphosphate = xanthine + 5-phospho-alpha-D-ribose 1-diphosphate. The enzyme catalyses IMP + diphosphate = hypoxanthine + 5-phospho-alpha-D-ribose 1-diphosphate. It participates in purine metabolism; GMP biosynthesis via salvage pathway; GMP from guanine: step 1/1. The protein operates within purine metabolism; XMP biosynthesis via salvage pathway; XMP from xanthine: step 1/1. Purine salvage pathway enzyme that catalyzes the transfer of the ribosyl-5-phosphate group from 5-phospho-alpha-D-ribose 1-diphosphate (PRPP) to the N9 position of the 6-oxopurines guanine and xanthine to form the corresponding ribonucleotides GMP (guanosine 5'-monophosphate) and XMP (xanthosine 5'-monophosphate), with the release of PPi. To a lesser extent, also acts on hypoxanthine. In Ruegeria sp. (strain TM1040) (Silicibacter sp.), this protein is Xanthine-guanine phosphoribosyltransferase.